The chain runs to 83 residues: Large ribosomal subunit protein eL43 (83 aa).

Residues C38, C41, C56, and C59 each coordinate Zn(2+). A C4-type zinc finger spans residues C38–C59.

It belongs to the eukaryotic ribosomal protein eL43 family. Putative zinc-binding subfamily. In terms of assembly, part of the 50S ribosomal subunit. Requires Zn(2+) as cofactor.

Binds to the 23S rRNA. In Pyrococcus horikoshii (strain ATCC 700860 / DSM 12428 / JCM 9974 / NBRC 100139 / OT-3), this protein is Large ribosomal subunit protein eL43.